The following is a 356-amino-acid chain: Phosphate acyltransferase (356 aa).

The protein belongs to the PlsX family. As to quaternary structure, homodimer. Probably interacts with PlsY.

It is found in the cytoplasm. It carries out the reaction a fatty acyl-[ACP] + phosphate = an acyl phosphate + holo-[ACP]. The protein operates within lipid metabolism; phospholipid metabolism. Functionally, catalyzes the reversible formation of acyl-phosphate (acyl-PO(4)) from acyl-[acyl-carrier-protein] (acyl-ACP). This enzyme utilizes acyl-ACP as fatty acyl donor, but not acyl-CoA. The chain is Phosphate acyltransferase from Mesorhizobium japonicum (strain LMG 29417 / CECT 9101 / MAFF 303099) (Mesorhizobium loti (strain MAFF 303099)).